An 89-amino-acid chain; its full sequence is Small ribosomal subunit protein uS14 (89 aa).

It belongs to the universal ribosomal protein uS14 family. In terms of assembly, part of the 30S ribosomal subunit. Contacts proteins S3 and S10.

Its function is as follows. Binds 16S rRNA, required for the assembly of 30S particles and may also be responsible for determining the conformation of the 16S rRNA at the A site. The sequence is that of Small ribosomal subunit protein uS14 from Onion yellows phytoplasma (strain OY-M).